Reading from the N-terminus, the 243-residue chain is Coproheme decarboxylase (243 aa).

Tyrosine 145 is a catalytic residue. Residue histidine 168 coordinates Fe-coproporphyrin III.

This sequence belongs to the ChdC family. Type 2 subfamily. The cofactor is Fe-coproporphyrin III.

The catalysed reaction is Fe-coproporphyrin III + 2 H2O2 + 2 H(+) = heme b + 2 CO2 + 4 H2O. It carries out the reaction Fe-coproporphyrin III + H2O2 + H(+) = harderoheme III + CO2 + 2 H2O. The enzyme catalyses harderoheme III + H2O2 + H(+) = heme b + CO2 + 2 H2O. The protein operates within porphyrin-containing compound metabolism; protoheme biosynthesis. Functionally, involved in coproporphyrin-dependent heme b biosynthesis. Catalyzes the decarboxylation of Fe-coproporphyrin III (coproheme) to heme b (protoheme IX), the last step of the pathway. The reaction occurs in a stepwise manner with a three-propionate intermediate. This is Coproheme decarboxylase from Streptomyces coelicolor (strain ATCC BAA-471 / A3(2) / M145).